The following is a 326-amino-acid chain: N-acetyl-gamma-glutamyl-phosphate reductase (326 aa).

Cys155 is a catalytic residue.

It belongs to the NAGSA dehydrogenase family. Type 1 subfamily.

The protein localises to the cytoplasm. The catalysed reaction is N-acetyl-L-glutamate 5-semialdehyde + phosphate + NADP(+) = N-acetyl-L-glutamyl 5-phosphate + NADPH + H(+). It functions in the pathway amino-acid biosynthesis; L-arginine biosynthesis; N(2)-acetyl-L-ornithine from L-glutamate: step 3/4. Catalyzes the NADPH-dependent reduction of N-acetyl-5-glutamyl phosphate to yield N-acetyl-L-glutamate 5-semialdehyde. The protein is N-acetyl-gamma-glutamyl-phosphate reductase of Shewanella baltica (strain OS195).